The sequence spans 242 residues: MAGHSKWANIKHKKAAADAKRGKIWTRLIKEIQVAARLGGGDANSNPRLRLAVDKAADANMPKDNVKRAIDRGVGGADGANYEEIRYEGYGISGAAIIVDTLTDNRIRTVAEVRHAFSKFGGNMGTDGSVAFMFDHVGQFLFAPGTSEDALMEAALEAGADDVSTNDDGSIEVLCDWQAFSAVKDALEAAGFKAELAEVTMKPQNEVEFTGDDAAKMQKLLDALENLDDVQEVYTNAVIVEE.

This sequence belongs to the TACO1 family.

It is found in the cytoplasm. The protein is Probable transcriptional regulatory protein Bamb_2332 of Burkholderia ambifaria (strain ATCC BAA-244 / DSM 16087 / CCUG 44356 / LMG 19182 / AMMD) (Burkholderia cepacia (strain AMMD)).